A 206-amino-acid chain; its full sequence is MAANKGKSQGSLVLHKVIMVGSGGVGKSALTLQFMYDEFVEDYEPTKADSYRKKVVLDGEEVQIDILDTAGQEDYAAIRDNYFRSGEGFLLVFSITEHESFTATAEFREQILRVKSEEDKIPLLVVGNKSDLEERRQVPVDEARGKAEEWGVQYVETSAKTRANVDKVFFDLMREIRAKKMSENKDKNGRKSSKSKKSFKERCCLL.

GTP is bound at residue 21–29 (GSGGVGKSA). The short motif at 43-51 (YEPTKADSY) is the Effector region element. GTP-binding positions include 68–72 (DTAGQ), 128–131 (NKSD), and 158–160 (SAK). The interval 181 to 206 (MSENKDKNGRKSSKSKKSFKERCCLL) is disordered. A Cysteine methyl ester modification is found at Cys203. A lipid anchor (S-geranylgeranyl cysteine) is attached at Cys203. A propeptide spans 204 to 206 (CLL) (removed in mature form).

This sequence belongs to the small GTPase superfamily. Ras family. Interacts with EXOC2/Sec5 and EXOC8/Exo84. Interacts (via effector domain) with RALBP1. Post-translationally, prenylation is essential for membrane localization. In terms of processing, the farnesylated form confers resistance to the proapoptotic and anti-anchorage-dependent growth effects of some geranylgeranyltransferase I inhibitors.

It localises to the cell membrane. The protein localises to the midbody. It catalyses the reaction GTP + H2O = GDP + phosphate + H(+). With respect to regulation, alternates between an inactive form bound to GDP and an active form bound to GTP. Activated by a guanine nucleotide-exchange factor (GEF) and inactivated by a GTPase-activating protein (GAP). Functionally, multifunctional GTPase involved in a variety of cellular processes including gene expression, cell migration, cell proliferation, oncogenic transformation and membrane trafficking. Accomplishes its multiple functions by interacting with distinct downstream effectors. Acts as a GTP sensor for GTP-dependent exocytosis of dense core vesicles. Required both to stabilize the assembly of the exocyst complex and to localize functional exocyst complexes to the leading edge of migrating cells. Required for suppression of apoptosis. In late stages of cytokinesis, upon completion of the bridge formation between dividing cells, mediates exocyst recruitment to the midbody to drive abscission. Involved in ligand-dependent receptor mediated endocytosis of the EGF and insulin receptors. The polypeptide is Ras-related protein Ral-B (Ralb) (Mus musculus (Mouse)).